A 72-amino-acid chain; its full sequence is uncharacterized protein (72 aa).

Its subcellular location is the cytoplasm. It is found in the nucleus. This is an uncharacterized protein from Saccharomyces cerevisiae (strain ATCC 204508 / S288c) (Baker's yeast).